The chain runs to 442 residues: ATP-dependent protease ATPase subunit HslU (442 aa).

ATP is bound by residues Ile18, 60 to 65 (GVGKTE), Asp255, Glu320, and Arg392.

The protein belongs to the ClpX chaperone family. HslU subfamily. In terms of assembly, a double ring-shaped homohexamer of HslV is capped on each side by a ring-shaped HslU homohexamer. The assembly of the HslU/HslV complex is dependent on binding of ATP.

The protein resides in the cytoplasm. ATPase subunit of a proteasome-like degradation complex; this subunit has chaperone activity. The binding of ATP and its subsequent hydrolysis by HslU are essential for unfolding of protein substrates subsequently hydrolyzed by HslV. HslU recognizes the N-terminal part of its protein substrates and unfolds these before they are guided to HslV for hydrolysis. The sequence is that of ATP-dependent protease ATPase subunit HslU from Shewanella sp. (strain W3-18-1).